The following is a 164-amino-acid chain: ATP synthase subunit b 2 (164 aa).

Residues 4-24 (TFWAFVGLVLFLALLAYFKVP) traverse the membrane as a helical segment.

The protein belongs to the ATPase B chain family. In terms of assembly, F-type ATPases have 2 components, F(1) - the catalytic core - and F(0) - the membrane proton channel. F(1) has five subunits: alpha(3), beta(3), gamma(1), delta(1), epsilon(1). F(0) has three main subunits: a(1), b(2) and c(10-14). The alpha and beta chains form an alternating ring which encloses part of the gamma chain. F(1) is attached to F(0) by a central stalk formed by the gamma and epsilon chains, while a peripheral stalk is formed by the delta and b chains.

It is found in the cell inner membrane. In terms of biological role, f(1)F(0) ATP synthase produces ATP from ADP in the presence of a proton or sodium gradient. F-type ATPases consist of two structural domains, F(1) containing the extramembraneous catalytic core and F(0) containing the membrane proton channel, linked together by a central stalk and a peripheral stalk. During catalysis, ATP synthesis in the catalytic domain of F(1) is coupled via a rotary mechanism of the central stalk subunits to proton translocation. Component of the F(0) channel, it forms part of the peripheral stalk, linking F(1) to F(0). The polypeptide is ATP synthase subunit b 2 (Bartonella quintana (strain Toulouse) (Rochalimaea quintana)).